We begin with the raw amino-acid sequence, 32 residues long: Ranatuerin-2BYa (32 aa).

Cysteine 27 and cysteine 32 are disulfide-bonded.

As to expression, expressed by the skin glands.

It is found in the secreted. In terms of biological role, antibacterial activity against Gram-positive bacterium S.aureus and Gram-negative bacterium E.coli. Weak hemolytic activity. This chain is Ranatuerin-2BYa, found in Rana boylii (Foothill yellow-legged frog).